Reading from the N-terminus, the 119-residue chain is DNA-directed RNA polymerase subunit omega (119 aa).

Belongs to the RNA polymerase subunit omega family. The RNAP catalytic core consists of 2 alpha, 1 beta, 1 beta' and 1 omega subunit. When a sigma factor is associated with the core the holoenzyme is formed, which can initiate transcription.

The enzyme catalyses RNA(n) + a ribonucleoside 5'-triphosphate = RNA(n+1) + diphosphate. Promotes RNA polymerase assembly. Latches the N- and C-terminal regions of the beta' subunit thereby facilitating its interaction with the beta and alpha subunits. In Caulobacter vibrioides (strain ATCC 19089 / CIP 103742 / CB 15) (Caulobacter crescentus), this protein is DNA-directed RNA polymerase subunit omega (rpoZ).